We begin with the raw amino-acid sequence, 206 residues long: Holliday junction branch migration complex subunit RuvA (206 aa).

The interval 1-64 (MIGKLKGVLD…EDMIRLYGFR (64 aa)) is domain I. Residues 65-144 (TVLEREWFRL…AFAGEAAGAI (80 aa)) are domain II. Residues 145 to 154 (GLKQDLGEGV) form a flexible linker region. Residues 154–206 (VAPAPVSDAVSALANLGYSRDIAANAVAAALKSAGEGADTGTLIRLGLKELAR) form a domain III region.

The protein belongs to the RuvA family. Homotetramer. Forms an RuvA(8)-RuvB(12)-Holliday junction (HJ) complex. HJ DNA is sandwiched between 2 RuvA tetramers; dsDNA enters through RuvA and exits via RuvB. An RuvB hexamer assembles on each DNA strand where it exits the tetramer. Each RuvB hexamer is contacted by two RuvA subunits (via domain III) on 2 adjacent RuvB subunits; this complex drives branch migration. In the full resolvosome a probable DNA-RuvA(4)-RuvB(12)-RuvC(2) complex forms which resolves the HJ.

It localises to the cytoplasm. In terms of biological role, the RuvA-RuvB-RuvC complex processes Holliday junction (HJ) DNA during genetic recombination and DNA repair, while the RuvA-RuvB complex plays an important role in the rescue of blocked DNA replication forks via replication fork reversal (RFR). RuvA specifically binds to HJ cruciform DNA, conferring on it an open structure. The RuvB hexamer acts as an ATP-dependent pump, pulling dsDNA into and through the RuvAB complex. HJ branch migration allows RuvC to scan DNA until it finds its consensus sequence, where it cleaves and resolves the cruciform DNA. This chain is Holliday junction branch migration complex subunit RuvA, found in Chelativorans sp. (strain BNC1).